The chain runs to 161 residues: PRS fimbrial major pilin protein (161 aa).

It belongs to the fimbrial protein family.

It localises to the secreted. Its subcellular location is the fimbrium. In terms of biological role, fimbriae (also called pili), polar filaments radiating from the surface of the bacterium to a length of 0.5-1.5 micrometers and numbering 100-300 per cell, enable bacteria to colonize the epithelium of specific host organs. This Escherichia coli protein is PRS fimbrial major pilin protein (prsA).